We begin with the raw amino-acid sequence, 617 residues long: Chaperone protein HscA homolog (617 aa).

The protein belongs to the heat shock protein 70 family.

Chaperone involved in the maturation of iron-sulfur cluster-containing proteins. Has a low intrinsic ATPase activity which is markedly stimulated by HscB. This Photobacterium profundum (strain SS9) protein is Chaperone protein HscA homolog.